The sequence spans 350 residues: Pleckstrin (350 aa).

A PH 1 domain is found at 4–101 (KRIREGYLVK…WVRDIKKAIK (98 aa)). Lysine 64 is modified (N6-acetyllysine). Phosphoserine occurs at positions 113 and 117. The 86-residue stretch at 136 to 221 (PEKGIKELNL…NPDAFYYFPD (86 aa)) folds into the DEP domain. The PH 2 domain occupies 244–347 (IIIKQGCLLK…WIKAIQVASR (104 aa)).

Functionally, major protein kinase C substrate of platelets. This Rattus norvegicus (Rat) protein is Pleckstrin (Plek).